We begin with the raw amino-acid sequence, 220 residues long: Protein-L-isoaspartate O-methyltransferase (220 aa).

Ser-70 is a catalytic residue.

This sequence belongs to the methyltransferase superfamily. L-isoaspartyl/D-aspartyl protein methyltransferase family.

The protein resides in the cytoplasm. It carries out the reaction [protein]-L-isoaspartate + S-adenosyl-L-methionine = [protein]-L-isoaspartate alpha-methyl ester + S-adenosyl-L-homocysteine. Its function is as follows. Catalyzes the methyl esterification of L-isoaspartyl residues in peptides and proteins that result from spontaneous decomposition of normal L-aspartyl and L-asparaginyl residues. It plays a role in the repair and/or degradation of damaged proteins. The protein is Protein-L-isoaspartate O-methyltransferase of Halorhodospira halophila (strain DSM 244 / SL1) (Ectothiorhodospira halophila (strain DSM 244 / SL1)).